We begin with the raw amino-acid sequence, 196 residues long: Nodulation protein A (196 aa).

Belongs to the NodA family.

The protein localises to the cytoplasm. In terms of biological role, N-acyltransferase required for nodulation. Acts in the production of a small, heat-stable compound (Nod) that stimulates mitosis in various plant protoplasts. This is Nodulation protein A from Sinorhizobium terangae.